Reading from the N-terminus, the 253-residue chain is tRNA uridine(34) hydroxylase (253 aa).

The Rhodanese domain maps to 127-221; that stretch reads RGRPLVLLDT…YFEEVGGEGY (95 aa). The Cysteine persulfide intermediate role is filled by Cys181.

The protein belongs to the TrhO family.

The catalysed reaction is uridine(34) in tRNA + AH2 + O2 = 5-hydroxyuridine(34) in tRNA + A + H2O. In terms of biological role, catalyzes oxygen-dependent 5-hydroxyuridine (ho5U) modification at position 34 in tRNAs. The protein is tRNA uridine(34) hydroxylase of Xanthomonas oryzae pv. oryzae (strain MAFF 311018).